The sequence spans 616 residues: Chaperone protein DnaK (616 aa).

Phosphothreonine; by autocatalysis is present on T175. Residues 579–616 (GGDPSQAGGFDPNAAGGAQQEPHDDNVVDADFKVDDDK) are disordered. A compositionally biased stretch (basic and acidic residues) spans 599 to 616 (EPHDDNVVDADFKVDDDK).

It belongs to the heat shock protein 70 family.

Acts as a chaperone. In Clostridium botulinum (strain Eklund 17B / Type B), this protein is Chaperone protein DnaK.